The following is a 123-amino-acid chain: Large ribosomal subunit protein uL14 (123 aa).

Belongs to the universal ribosomal protein uL14 family. Part of the 50S ribosomal subunit. Forms a cluster with proteins L3 and L19. In the 70S ribosome, L14 and L19 interact and together make contacts with the 16S rRNA in bridges B5 and B8.

In terms of biological role, binds to 23S rRNA. Forms part of two intersubunit bridges in the 70S ribosome. The sequence is that of Large ribosomal subunit protein uL14 from Serratia proteamaculans (strain 568).